The following is a 592-amino-acid chain: Neurogenic locus notch homolog protein (592 aa).

Residues 1-19 form the signal peptide; the sequence is MIFVLTLVALCTAIHCPDG. 6 consecutive EGF-like domains span residues 64–104, 106–146, 267–307, 353–387, 453–488, and 546–588; these read YPSI…DYQV, VPEA…EKCT, YPEA…NTCI, NSQTNPPQLCHSAGSCDFDTGVCSCNPTNSGPTCE, VPNSCVTASLIICSNRGTCTDGVCKCNEGYSGALCE, and IDGE…KHCN. Intrachain disulfides connect Cys-68–Cys-82, Cys-76–Cys-92, Cys-110–Cys-123, Cys-117–Cys-134, Cys-136–Cys-145, Cys-271–Cys-284, Cys-278–Cys-293, Cys-295–Cys-306, Cys-362–Cys-375, Cys-377–Cys-386, Cys-457–Cys-471, Cys-478–Cys-487, Cys-550–Cys-565, Cys-555–Cys-576, and Cys-578–Cys-587. Asn-552 carries N-linked (GlcNAc...) asparagine glycosylation.

Belongs to the NOTCH family. Interacts with EB1.

The protein localises to the cell projection. Its subcellular location is the cilium. It localises to the flagellum. It is found in the cytoplasm. The protein resides in the cytoskeleton. The protein localises to the flagellum axoneme. In Giardia intestinalis (strain ATCC 50803 / WB clone C6) (Giardia lamblia), this protein is Neurogenic locus notch homolog protein.